A 134-amino-acid polypeptide reads, in one-letter code: Urease subunit beta (134 aa).

It belongs to the urease beta subunit family. As to quaternary structure, heterotrimer of UreA (gamma), UreB (beta) and UreC (alpha) subunits. Three heterotrimers associate to form the active enzyme.

It localises to the cytoplasm. It carries out the reaction urea + 2 H2O + H(+) = hydrogencarbonate + 2 NH4(+). It functions in the pathway nitrogen metabolism; urea degradation; CO(2) and NH(3) from urea (urease route): step 1/1. This chain is Urease subunit beta, found in Staphylococcus saprophyticus subsp. saprophyticus (strain ATCC 15305 / DSM 20229 / NCIMB 8711 / NCTC 7292 / S-41).